The sequence spans 993 residues: General transcription factor II-I repeat domain-containing protein 1 (993 aa).

GTF2I-like repeat units follow at residues 117–211 and 332–426; these read LGPT…EPKS and LRET…DGTT. Positions 461–480 are disordered; it reads GSRSEKSSISDECEPGTSSE. GTF2I-like repeat units follow at residues 597–691, 727–821, and 824–918; these read DGIG…LEDC, LSRI…RPDD, and ANRL…ICSE. The interval 916-961 is disordered; it reads CSEPPKIKNGNTGPKRKRKRVSEGNSISSASSNCSSSSSSSSNMDP. A Nuclear localization signal motif is present at residues 929 to 936; that stretch reads PKRKRKRV. Positions 938 to 961 are enriched in low complexity; it reads EGNSISSASSNCSSSSSSSSNMDP.

It belongs to the TFII-I family. As to quaternary structure, interacts (via repeats 4-5) with foxh1/fast1 (via Fork-head domain). Interacts with smad2 and smad3 (via MH1 domain) in a ligand (activin)-dependent manner. Interacts with pou5f1.1/oct-25 to form a repression complex on the promoters of the gsc and mix2 genes. As to expression, uniformly expressed in the embryo in pre- and early gastrula stages. Enriched in the head region of early neurula through tailbud stages.

It localises to the nucleus. In terms of biological role, transcription factor that activates a subset of organizer-specific genes. Binds to the distal element (DE) of the gsc promoter to regulate its expression. In the presence of pou5f1.1/oct-25, forms a repression complex on the promoter of the gsc and mix2 genes to inhibit their transcription. The sequence is that of General transcription factor II-I repeat domain-containing protein 1 (gtf2ird1) from Xenopus laevis (African clawed frog).